The chain runs to 473 residues: UDP-N-acetylmuramate--L-alanine ligase (473 aa).

Residue 112-118 (GTHGKTT) coordinates ATP.

The protein belongs to the MurCDEF family.

The protein localises to the cytoplasm. It carries out the reaction UDP-N-acetyl-alpha-D-muramate + L-alanine + ATP = UDP-N-acetyl-alpha-D-muramoyl-L-alanine + ADP + phosphate + H(+). The protein operates within cell wall biogenesis; peptidoglycan biosynthesis. Functionally, cell wall formation. This chain is UDP-N-acetylmuramate--L-alanine ligase, found in Nitrosomonas eutropha (strain DSM 101675 / C91 / Nm57).